The following is a 474-amino-acid chain: MPVSIGKIVRVVGPTVDVKFEDGTLPKIENALTCDNNGKILYLEVAQQLGDGIVRAVAMDSTDGLTRDKVVKDTGKPICVPVGRQTLGRIFNVVGEIIDGGGPVPEPNKVSSIYAEPPRFDMQSTSSEILETGIKVIDLLAPYSKGGKVGLFGGAGVGKTVLIMELINNIAKAYGGFSVFAGVGERTREGNDLYSEMVESGVIDKEHPEKSKVVLVYGQMNEPPGARAKVAMSALTMAEYFRDKEGQDVLFFVDNIFRFTQAGAELSTLLGRIPSAVGYQPTLATDMGRLQERITSTKNGSITSVQAIYVPADDITDPAPATSFAHLDSTTVLSRQVAEAGIYPAVDALASSAQILSPEVLGQEHYEVAQKVKGILQSYKSLQDIIAILGMEELSEEDKLTVYRARKIEKFLSQPFHVAEVFTGQPGKFVSLKDTIAGFKELVEGKCDDMPEAAFYMVGNMNEAREKAISLREK.

G153–T160 serves as a coordination point for ATP.

This sequence belongs to the ATPase alpha/beta chains family. In terms of assembly, F-type ATPases have 2 components, CF(1) - the catalytic core - and CF(0) - the membrane proton channel. CF(1) has five subunits: alpha(3), beta(3), gamma(1), delta(1), epsilon(1). CF(0) has three main subunits: a(1), b(2) and c(9-12). The alpha and beta chains form an alternating ring which encloses part of the gamma chain. CF(1) is attached to CF(0) by a central stalk formed by the gamma and epsilon chains, while a peripheral stalk is formed by the delta and b chains.

The protein resides in the cell inner membrane. It carries out the reaction ATP + H2O + 4 H(+)(in) = ADP + phosphate + 5 H(+)(out). Its function is as follows. Produces ATP from ADP in the presence of a proton gradient across the membrane. The catalytic sites are hosted primarily by the beta subunits. The sequence is that of ATP synthase subunit beta from Neorickettsia sennetsu (strain ATCC VR-367 / Miyayama) (Ehrlichia sennetsu).